The following is a 93-amino-acid chain: Co-chaperonin GroES (93 aa).

It belongs to the GroES chaperonin family. In terms of assembly, heptamer of 7 subunits arranged in a ring. Interacts with the chaperonin GroEL.

Its subcellular location is the cytoplasm. In terms of biological role, together with the chaperonin GroEL, plays an essential role in assisting protein folding. The GroEL-GroES system forms a nano-cage that allows encapsulation of the non-native substrate proteins and provides a physical environment optimized to promote and accelerate protein folding. GroES binds to the apical surface of the GroEL ring, thereby capping the opening of the GroEL channel. In Streptococcus anginosus, this protein is Co-chaperonin GroES.